The primary structure comprises 273 residues: Putative inactive beta-glucuronidase protein GUSBP11 (273 aa).

Residues 1–20 form a disordered region; it reads MTAAETGRGKPRLGGGSGLG.

The protein belongs to the glycosyl hydrolase 2 family.

The protein is Putative inactive beta-glucuronidase protein GUSBP11 (GUSBP11) of Homo sapiens (Human).